Consider the following 104-residue polypeptide: MIRKAFVMQVNPDSHDEYERRHTPIWPELESVLKDHGAHHYAIYLDKARNLLFATVEIESEERWNAVAHTDVCQRWWKHMRDVMPSNPDNSPVSAELKEVFYLD.

Y18 provides a ligand contact to substrate. H22 serves as the catalytic Proton donor. Residues Y41 and 76 to 77 each bind substrate; that span reads WW.

This sequence belongs to the rhamnose mutarotase family. Homodimer.

It is found in the cytoplasm. It carries out the reaction alpha-L-rhamnose = beta-L-rhamnose. The protein operates within carbohydrate metabolism; L-rhamnose metabolism. Its function is as follows. Involved in the anomeric conversion of L-rhamnose. This chain is L-rhamnose mutarotase, found in Enterobacter sp. (strain 638).